A 217-amino-acid polypeptide reads, in one-letter code: Chorionic somatomammotropin hormone 2 (217 aa).

Residues M1 to A26 form the signal peptide. Position 44 (H44) interacts with Zn(2+). The cysteines at positions 79 and 191 are disulfide-linked. E200 is a Zn(2+) binding site. A disulfide bridge connects residues C208 and C215.

Belongs to the somatotropin/prolactin family. Can be found in a monomeric as well as dimeric form.

Its subcellular location is the secreted. Functionally, produced only during pregnancy and is involved in stimulating lactation, fetal growth and metabolism. Does not interact with GHR but only activates PRLR through zinc-induced dimerization. In Homo sapiens (Human), this protein is Chorionic somatomammotropin hormone 2 (CSH2).